The following is a 277-amino-acid chain: Protein RKD3 (277 aa).

Residues 142–226 form the RWP-RK domain; that stretch reads KRIIMKRRYR…LGNTKGRTPK (85 aa). The stretch at 201–246 forms a coiled coil; sequence RKLTSLNALIANLKDLLGNTKGRTPKSKLRNALELLEMEKKMIEEV.

The protein localises to the nucleus. Functionally, putative transcription factor. The polypeptide is Protein RKD3 (RKD3) (Arabidopsis thaliana (Mouse-ear cress)).